Here is a 336-residue protein sequence, read N- to C-terminus: UDP-3-O-acylglucosamine N-acyltransferase (336 aa).

Residue His-237 is the Proton acceptor of the active site.

It belongs to the transferase hexapeptide repeat family. LpxD subfamily. In terms of assembly, homotrimer.

It catalyses the reaction a UDP-3-O-[(3R)-3-hydroxyacyl]-alpha-D-glucosamine + a (3R)-hydroxyacyl-[ACP] = a UDP-2-N,3-O-bis[(3R)-3-hydroxyacyl]-alpha-D-glucosamine + holo-[ACP] + H(+). It functions in the pathway bacterial outer membrane biogenesis; LPS lipid A biosynthesis. Its function is as follows. Catalyzes the N-acylation of UDP-3-O-acylglucosamine using 3-hydroxyacyl-ACP as the acyl donor. Is involved in the biosynthesis of lipid A, a phosphorylated glycolipid that anchors the lipopolysaccharide to the outer membrane of the cell. The protein is UDP-3-O-acylglucosamine N-acyltransferase of Alcanivorax borkumensis (strain ATCC 700651 / DSM 11573 / NCIMB 13689 / SK2).